The sequence spans 386 residues: Lipid-A-disaccharide synthase (386 aa).

This sequence belongs to the LpxB family.

It carries out the reaction a lipid X + a UDP-2-N,3-O-bis[(3R)-3-hydroxyacyl]-alpha-D-glucosamine = a lipid A disaccharide + UDP + H(+). It participates in bacterial outer membrane biogenesis; LPS lipid A biosynthesis. Functionally, condensation of UDP-2,3-diacylglucosamine and 2,3-diacylglucosamine-1-phosphate to form lipid A disaccharide, a precursor of lipid A, a phosphorylated glycolipid that anchors the lipopolysaccharide to the outer membrane of the cell. The polypeptide is Lipid-A-disaccharide synthase (Chromohalobacter salexigens (strain ATCC BAA-138 / DSM 3043 / CIP 106854 / NCIMB 13768 / 1H11)).